Consider the following 197-residue polypeptide: Pyridoxal 5'-phosphate synthase subunit PdxT (197 aa).

53–55 contributes to the L-glutamine binding site; sequence GES. Cys85 functions as the Nucleophile in the catalytic mechanism. Residues Arg114 and 142 to 143 contribute to the L-glutamine site; that span reads IR. Catalysis depends on charge relay system residues His179 and Glu181.

The protein belongs to the glutaminase PdxT/SNO family. As to quaternary structure, in the presence of PdxS, forms a dodecamer of heterodimers. Only shows activity in the heterodimer.

It catalyses the reaction aldehydo-D-ribose 5-phosphate + D-glyceraldehyde 3-phosphate + L-glutamine = pyridoxal 5'-phosphate + L-glutamate + phosphate + 3 H2O + H(+). It carries out the reaction L-glutamine + H2O = L-glutamate + NH4(+). It participates in cofactor biosynthesis; pyridoxal 5'-phosphate biosynthesis. Its function is as follows. Catalyzes the hydrolysis of glutamine to glutamate and ammonia as part of the biosynthesis of pyridoxal 5'-phosphate. The resulting ammonia molecule is channeled to the active site of PdxS. This chain is Pyridoxal 5'-phosphate synthase subunit PdxT, found in Thermococcus onnurineus (strain NA1).